A 106-amino-acid chain; its full sequence is L-rhamnose mutarotase (106 aa).

Residue tyrosine 20 coordinates substrate. The Proton donor role is filled by histidine 24. Substrate-binding positions include tyrosine 43 and tryptophan 78 to tryptophan 79.

It belongs to the rhamnose mutarotase family. Homodimer.

The protein localises to the cytoplasm. It catalyses the reaction alpha-L-rhamnose = beta-L-rhamnose. It functions in the pathway carbohydrate degradation; L-rhamnose degradation. Involved in the anomeric conversion of L-rhamnose. The sequence is that of L-rhamnose mutarotase (rhaM) from Rhizobium leguminosarum bv. trifolii.